A 381-amino-acid chain; its full sequence is Guanine nucleotide-binding protein G(olf) subunit alpha (381 aa).

The interval 1-25 (MGCLGNSSKTAEDQGVDEKERREAN) is disordered. Residue G2 is the site of N-palmitoyl glycine attachment. Residue C3 is the site of S-palmitoyl cysteine attachment. A compositionally biased stretch (basic and acidic residues) spans 10–25 (TAEDQGVDEKERREAN). The G-alpha domain occupies 41–381 (ATHRLLLLGA…RMHLKQYELL (341 aa)). The tract at residues 44 to 57 (RLLLLGAGESGKST) is G1 motif. Residues E52, S53, G54, K55, S56, and T57 each coordinate GTP. S56 contributes to the Mg(2+) binding site. A Phosphothreonine modification is found at T178. Positions 183-191 (DLLRCRVLT) are G2 motif. GTP contacts are provided by L185, R186, and T191. Residues T191 and D210 each coordinate Mg(2+). A G3 motif region spans residues 206 to 215 (FHMFDVGGQR). Residues G213, N279, K280, D282, and A353 each coordinate GTP. The G4 motif stretch occupies residues 275–282 (ILFLNKQD). The segment at 351–356 (TCAVDT) is G5 motif.

Belongs to the G-alpha family. G(s) subfamily. In terms of assembly, g proteins are composed of 3 units; alpha, beta and gamma. The alpha chain contains the guanine nucleotide binding site. Interacts with GAS2L2. Interacts (GDP-bound form) with RIC8B (via C-terminus); promoting GNAL folding and association with the plasma membrane.

It is found in the cell membrane. It carries out the reaction GTP + H2O = GDP + phosphate + H(+). In terms of biological role, guanine nucleotide-binding protein (G protein) involved as transducer in olfactory signal transduction controlled by G protein-coupled receptors (GPCRs). Contains the guanine nucleotide binding site and alternates between an active, GTP-bound state and an inactive, GDP-bound state. Signaling by an activated GPCR promotes GDP release and GTP binding. The alpha subunit has a low GTPase activity that converts bound GTP to GDP, thereby terminating the signal. Both GDP release and GTP hydrolysis are modulated by numerous regulatory proteins. GNAL/G(olf) alpha specifically mediates olfactory signal transduction within the olfactory neuroepithelium and the basal ganglia following GPCRs activation. Acts by promoting the specific activation of adenylyl cyclase ADCY3, resulting in increased levels of the signaling molecule cAMP. This Mus musculus (Mouse) protein is Guanine nucleotide-binding protein G(olf) subunit alpha.